Here is a 610-residue protein sequence, read N- to C-terminus: UvrABC system protein C (610 aa).

Residues S16 to V94 form the GIY-YIG domain. Positions D204–V239 constitute a UVR domain.

Belongs to the UvrC family. Interacts with UvrB in an incision complex.

It is found in the cytoplasm. Functionally, the UvrABC repair system catalyzes the recognition and processing of DNA lesions. UvrC both incises the 5' and 3' sides of the lesion. The N-terminal half is responsible for the 3' incision and the C-terminal half is responsible for the 5' incision. The sequence is that of UvrABC system protein C from Salmonella agona (strain SL483).